The primary structure comprises 208 residues: Interleukin-6 (208 aa).

An N-terminal signal peptide occupies residues 1–20 (MNSLSTIAFSLGLLLVTATA). The cysteines at positions 67 and 73 are disulfide-linked. Ser76 is subject to Phosphoserine. Cys96 and Cys106 are oxidised to a cystine. N-linked (GlcNAc...) asparagine glycosylation is present at Asn167.

This sequence belongs to the IL-6 superfamily. In terms of assembly, component of a hexamer of two molecules each of IL6, IL6R and IL6ST; first binds to IL6R to associate with the signaling subunit IL6ST. Interacts with IL6R (via the N-terminal ectodomain); this interaction may be affected by IL6R-binding with SORL1, hence decreasing IL6 cis signaling. Interacts with SORL1 (via the N-terminal ectodomain); this interaction leads to IL6 internalization and lysosomal degradation. May form a trimeric complex with the soluble SORL1 ectodomain and soluble IL6R receptor; this interaction might stabilize circulating IL6, hence promoting IL6 trans signaling.

It localises to the secreted. Cytokine with a wide variety of biological functions in immunity, tissue regeneration, and metabolism. Binds to IL6R, then the complex associates to the signaling subunit IL6ST/gp130 to trigger the intracellular IL6-signaling pathway. The interaction with the membrane-bound IL6R and IL6ST stimulates 'classic signaling', whereas the binding of IL6 and soluble IL6R to IL6ST stimulates 'trans-signaling'. Alternatively, 'cluster signaling' occurs when membrane-bound IL6:IL6R complexes on transmitter cells activate IL6ST receptors on neighboring receiver cells. In terms of biological role, IL6 is a potent inducer of the acute phase response. Rapid production of IL6 contributes to host defense during infection and tissue injury, but excessive IL6 synthesis is involved in disease pathology. In the innate immune response, is synthesized by myeloid cells, such as macrophages and dendritic cells, upon recognition of pathogens through toll-like receptors (TLRs) at the site of infection or tissue injury. In the adaptive immune response, is required for the differentiation of B cells into immunoglobulin-secreting cells. Plays a major role in the differentiation of CD4(+) T cell subsets. Essential factor for the development of T follicular helper (Tfh) cells that are required for the induction of germinal-center formation. Required to drive naive CD4(+) T cells to the Th17 lineage. Also required for proliferation of myeloma cells and the survival of plasmablast cells. Its function is as follows. Acts as an essential factor in bone homeostasis and on vessels directly or indirectly by induction of VEGF, resulting in increased angiogenesis activity and vascular permeability. Induces, through 'trans-signaling' and synergistically with IL1B and TNF, the production of VEGF. Involved in metabolic controls, is discharged into the bloodstream after muscle contraction increasing lipolysis and improving insulin resistance. 'Trans-signaling' in central nervous system also regulates energy and glucose homeostasis. Mediates, through GLP-1, crosstalk between insulin-sensitive tissues, intestinal L cells and pancreatic islets to adapt to changes in insulin demand. Also acts as a myokine. Plays a protective role during liver injury, being required for maintenance of tissue regeneration. Also has a pivotal role in iron metabolism by regulating HAMP/hepcidin expression upon inflammation or bacterial infection. Through activation of IL6ST-YAP-NOTCH pathway, induces inflammation-induced epithelial regeneration. The chain is Interleukin-6 (IL6) from Delphinapterus leucas (Beluga whale).